Here is a 486-residue protein sequence, read N- to C-terminus: MSNYSIKQSAKNNYSSSSSGGFRGGHGGNEYFCGVGGEGDFGGMGGFGACGAGYGGGAGYGGGAGGAGYGGGAGGGGAGYGGGFGGGSGAGYGGGFGGGAGGGYGGGFGGGFGGGAGGMDIFSTNEKQTMQNLNDRLASYLDKVHALETANTELERKIKEWYEKQRPGSSSGDGAKDYSKYYTMINDLKNQIIAASIENAKFLLQNDNARLAADDFKMKFENEQYMRQTVEADINGLRRVMDDLTLSKSDLESQLESLSEELAYLKKNHEDELKGMQVTQVGQVNVEMNAAPSSDLTKILNDMRSQYEDLAKRNRAAAEEQFNRMSTDLKNTLSQGIEQQKESKSELTELKRTLQSLEIELQSQLAMKKSLEMTLAEVEGSFCMKLSRLQEMIVNVEEQIARLKGESECQTAEYQQLLDIKTRLENEIETYRRLLDGDLSKPKSGGGTSTNTGSTSSKGSTRTVKRREIIEEVVDGKVVSTKVVDM.

The head stretch occupies residues 1–125 (MSNYSIKQSA…AGGMDIFSTN (125 aa)). Positions 126–161 (EKQTMQNLNDRLASYLDKVHALETANTELERKIKEW) are coil 1A. The 317-residue stretch at 126–442 (EKQTMQNLND…RLLDGDLSKP (317 aa)) folds into the IF rod domain. Residues 162 to 184 (YEKQRPGSSSGDGAKDYSKYYTM) are linker 1. Residues 185 to 276 (INDLKNQIIA…KNHEDELKGM (92 aa)) are coil 1B. The segment at 277 to 299 (QVTQVGQVNVEMNAAPSSDLTKI) is linker 12. The tract at residues 300 to 438 (LNDMRSQYED…ETYRRLLDGD (139 aa)) is coil 2. The segment at 435–466 (LDGDLSKPKSGGGTSTNTGSTSSKGSTRTVKR) is disordered. The interval 439–486 (LSKPKSGGGTSTNTGSTSSKGSTRTVKRREIIEEVVDGKVVSTKVVDM) is tail. A compositionally biased stretch (low complexity) spans 449-461 (STNTGSTSSKGST).

Belongs to the intermediate filament family. In terms of assembly, heterotetramer of two type I and two type II keratins.

The protein is Keratin-3, type I cytoskeletal 51 kDa of Xenopus laevis (African clawed frog).